The primary structure comprises 508 residues: MGLPWYRVHTVVLNDPGRLLSVHIMHTALVAGWAGSMALYELAVFDPSDPVLDPMWRQGMFVIPFMTRLGITNSWGGWSITGGTITNSGIWSYEGVAGAHIVLSGLCFLAAIWHWVYWDLEIFSDERTGKPSLDLPKIFGIHLFLSGVACFGFGAFHVTGLYGPGIWVSDPYGLTGRVQSVNPAWGVGGFDPFVPGGIASHHIAAGTLGILAGLFHLSVRPPQRLYKGLRMGNIETVLSSSIAAVFFAAFVVAGTMWYGSATTPIELFGPTRYQWDQGYFQQEIYRRIGAGLAENQSLSEAWSKIPEKLAFYDYIGNNPAKGGLFRAGSMDNGDGIAVGWLGHPVFRDKEGRELFVRRMPTFFETFPVVLVDGDGIVRADVPFRRAESKYSVEQVGVTVEFYGGELNGVSYSDPATVKKYARRAQLGEIFELDRAALKSDGVFRSSPRGWFTFGHVSFALLFFFGHIWHGARTLFRDVFAGIDPDLDAQVEFGAFQKLGDPTTKRQAV.

Transmembrane regions (helical) follow at residues 21–36, 101–115, 140–156, 203–218, 237–252, and 457–472; these read SVHIMHTALVAGWAGS, IVLSGLCFLAAIWHW, GIHLFLSGVACFGFGAF, IAAGTLGILAGLFHLS, VLSSSIAAVFFAAFVV, and SFALLFFFGHIWHGAR.

The protein belongs to the PsbB/PsbC family. PsbB subfamily. PSII is composed of 1 copy each of membrane proteins PsbA, PsbB, PsbC, PsbD, PsbE, PsbF, PsbH, PsbI, PsbJ, PsbK, PsbL, PsbM, PsbT, PsbX, PsbY, PsbZ, Psb30/Ycf12, at least 3 peripheral proteins of the oxygen-evolving complex and a large number of cofactors. It forms dimeric complexes. The cofactor is Binds multiple chlorophylls. PSII binds additional chlorophylls, carotenoids and specific lipids..

The protein resides in the plastid. It is found in the chloroplast thylakoid membrane. Functionally, one of the components of the core complex of photosystem II (PSII). It binds chlorophyll and helps catalyze the primary light-induced photochemical processes of PSII. PSII is a light-driven water:plastoquinone oxidoreductase, using light energy to abstract electrons from H(2)O, generating O(2) and a proton gradient subsequently used for ATP formation. The chain is Photosystem II CP47 reaction center protein from Pelargonium hortorum (Common geranium).